The primary structure comprises 112 residues: Protein Churchill (112 aa).

Cys-2, Cys-5, Cys-30, Cys-33, His-59, Cys-61, Cys-64, His-66, His-71, Cys-88, and Cys-91 together coordinate Zn(2+).

The protein belongs to the Churchill family.

In terms of biological role, transcriptional activator that mediates FGF signaling during neural development. Plays a role in the regulation of cell movement. Does not bind DNA by itself. The protein is Protein Churchill (churc1) of Xenopus laevis (African clawed frog).